Here is a 348-residue protein sequence, read N- to C-terminus: UDP-3-O-acylglucosamine N-acyltransferase (348 aa).

The active-site Proton acceptor is the His-241.

This sequence belongs to the transferase hexapeptide repeat family. LpxD subfamily. Homotrimer.

The enzyme catalyses a UDP-3-O-[(3R)-3-hydroxyacyl]-alpha-D-glucosamine + a (3R)-hydroxyacyl-[ACP] = a UDP-2-N,3-O-bis[(3R)-3-hydroxyacyl]-alpha-D-glucosamine + holo-[ACP] + H(+). The protein operates within bacterial outer membrane biogenesis; LPS lipid A biosynthesis. Catalyzes the N-acylation of UDP-3-O-acylglucosamine using 3-hydroxyacyl-ACP as the acyl donor. Is involved in the biosynthesis of lipid A, a phosphorylated glycolipid that anchors the lipopolysaccharide to the outer membrane of the cell. The protein is UDP-3-O-acylglucosamine N-acyltransferase of Neisseria meningitidis serogroup C (strain 053442).